Consider the following 158-residue polypeptide: Large ribosomal subunit protein uL30 (158 aa).

It belongs to the universal ribosomal protein uL30 family. Part of the 50S ribosomal subunit.

This is Large ribosomal subunit protein uL30 from Sulfurisphaera tokodaii (strain DSM 16993 / JCM 10545 / NBRC 100140 / 7) (Sulfolobus tokodaii).